Here is a 607-residue protein sequence, read N- to C-terminus: Rap1 GTPase-GDP dissociation stimulator 1 (607 aa).

2 ARM repeats span residues 89 to 131 (GLIS…DQAG) and 170 to 211 (DSLQ…NLAE). The interval 122-170 (EGRSAVDQAGGAQIVIDHLRSLCGRTDPASEKLMTVFCGMLMNYSNEND) is prevents binding to prenylated RHOA. Lys230 is subject to N6-acetyllysine. ARM repeat units lie at residues 347-390 (DGNC…NLAI), 391-431 (PVVN…MLID), and 479-519 (SKDV…LIAA).

Interacts with RABL3. Interacts with RHOT1. As to quaternary structure, interacts with unprenylated RHOA; the interaction is direct. Interacts with RAP1A. Interacts with KRAS. Interacts with RAC1. Interacts with RAP1B. Preferentially interacts with unprenylated GTPases that will become geranylgeranylated. May also interact with prenylated GTPases. In terms of assembly, interacts with prenylated RHOA; the interaction is direct and in a 1:1 stoichiometry. Interacts with RAP1A. Interacts with KRAS. Interacts with RAC1. Interacts with RAP1B. Preferentially interacts with prenylated GTPases. Post-translationally, serotonylated on Gln residues by TGM2 in response to hypoxia, leading to its inactivation.

Its subcellular location is the cytoplasm. It localises to the cytosol. The protein localises to the endoplasmic reticulum. The protein resides in the mitochondrion. It is found in the nucleus. Acts as a GEF (guanine nucleotide exchange factor) for the Rho family of small GTP-binding proteins (G proteins) that stimulates the dissociation of GDP to enable subsequent binding of GTP. Additionally, appears to chaperone the processing and/or trafficking of small GTPases containing a C-terminal polybasic region independently of GEF activity. Targets include RAP1A/RAP1B, RHOA, RHOB, RHOC, RAC1 and KRAS. Regulates mitochondrial dynamics by controlling RHOT function to promote mitochondrial fission during high calcium conditions. Able to promote the Ca(2+) release from the endoplasmic reticulum via both inositol trisphosphate (Ins3P) and ryanodine sensitive receptors leading to a enhanced mitochondrial Ca(2+) uptake. In terms of biological role, acts as a GEF (guanine nucleotide exchange factor) for unprenylated RHOA. Chaperones the entry and passage of small GTPases through the prenylation pathway. Recognizes the last amino acid in the GTPase C-terminal CAAX motif with a preference for 'Leu' over 'Met', indicating involvement in the geranylgeranylation pathway. May also recognize prenylated GTPases. Functionally, acts as a GEF (guanine nucleotide exchange factor) for prenylated RHOA. Acts as a GEF for RHOC. Chaperones the downstream trafficking and/or processing of small newly prenylated GTPases. Escorts RAC1 to the nucleus. This chain is Rap1 GTPase-GDP dissociation stimulator 1, found in Mus musculus (Mouse).